A 558-amino-acid chain; its full sequence is Formate--tetrahydrofolate ligase (558 aa).

An ATP-binding site is contributed by 66–73; it reads TPAGEGKT.

It belongs to the formate--tetrahydrofolate ligase family.

The catalysed reaction is (6S)-5,6,7,8-tetrahydrofolate + formate + ATP = (6R)-10-formyltetrahydrofolate + ADP + phosphate. Its pathway is one-carbon metabolism; tetrahydrofolate interconversion. The protein is Formate--tetrahydrofolate ligase of Neisseria meningitidis serogroup C / serotype 2a (strain ATCC 700532 / DSM 15464 / FAM18).